The chain runs to 172 residues: Stellate protein CG33238 (172 aa).

This sequence belongs to the casein kinase 2 subunit beta family. In terms of assembly, interacts in vitro with the casein kinase 2 alpha subunit (CkII-alpha). The relevance of such interaction is however unclear in vivo. In terms of tissue distribution, probably not expressed in wild-type flies. In males lacking the Y chromosome, it is testis-specific and constitutes the main component of star-shaped crystals.

Unknown. In males lacking the Y chromosome, its strong overexpression leads to the appearance of proteinaceous star-shaped crystals in the primary spermatocytes causing meiotic drive, possibly by interfering with normal casein kinase 2 activity. This chain is Stellate protein CG33238 (Ste:CG33238), found in Drosophila melanogaster (Fruit fly).